The sequence spans 185 residues: Protein-arginine kinase activator protein (185 aa).

Arginine 115 and arginine 169 each carry phosphoarginine. Positions 139–174 (RRQIDMLKKELESLIHQEEFENAAHVRDQIRLLEQS) constitute a UVR domain.

In terms of assembly, interacts with McsB. Phosphorylated on Arg residues by McsB.

Its function is as follows. Activates the phosphorylation activity of the protein-arginine kinase McsB. Is required for the delocalization of competence proteins from the cell poles. This chain is Protein-arginine kinase activator protein (mcsA), found in Bacillus subtilis (strain 168).